We begin with the raw amino-acid sequence, 179 residues long: MAALQKSVSSFLMGTLATSCLLLLALLVQGGAAAPISSHCRLDKSNFQQPYITNRTFMLAKEASLADNNTDVRLIGEKLFHGVSMSERCYLMKQVLNFTLEEVLFPQSDRFQPYMQEVVPFLARLSNRLSTCHIEGDDLHIQRNVQKLKDTVKKLGESGEIKAIGELDLLFMSLRNACI.

Residues 1 to 33 (MAALQKSVSSFLMGTLATSCLLLLALLVQGGAA) form the signal peptide. Intrachain disulfides connect Cys40–Cys132 and Cys89–Cys178. N-linked (GlcNAc...) asparagine glycosylation is found at Asn54, Asn68, and Asn97.

It belongs to the IL-10 family.

The protein resides in the secreted. Cytokine that plays a critical role in modulating tissue responses during inflammation. Plays an essential role in the regeneration of epithelial cells to maintain barrier function after injury and for the prevention of further tissue damage. Unlike most of the cytokines, has no effect on immune cells. Signals through a heterodimeric receptor composed of two subunits, the specific receptor IL22RA1 which is present on non-immune cells in many organs and the shared subunit IL10RB. Ligation of IL22RA1 with IL22 induces activation of the tyrosine kinases JAK1 and TYK2, which in turn activates STAT3. In turn, promotes cell survival and proliferation through STAT3, ERK1/2 and PI3K/AKT pathways. Promotes phosphorylation of GSK3B at 'Ser-9' and CTTN. Promotes epithelial cell spreading. In Homo sapiens (Human), this protein is Interleukin-22 (IL22).